A 463-amino-acid polypeptide reads, in one-letter code: MADYIVKDIKLAEFGRKELDIAETEMPGLMACREEFGPSQPLKGARIAGSLHMTIQTAVLIETLKALGADVRWASCNIFSTQDHAAAAIAAGGTPVFAVKGETLEEYWAYTDKIFQFPEGTCNMILDDGGDATLYILLGARVEAGETDLIATPTSEEEVCLFNQIKKRMVESPGWFTQQRAAIKGVSEETTTGVHRLYDLHKKGLLPFPAINVNDSVTKSKFDNKYGCKESLVDGIRRATDVMMAGKVAVVCGYGDVGKGSAASLRGAGARVKVTEVDPICALQAAMDGFEVVVLEDVVADADIFITTTGNKDVIRIEHMREMKDMAIVGNIGHFDNEIQVAALKNHKWTNIKDQVDMIEMPSGARIILLSEGRLLNLGNATGHPSFVMSASFTNQVLAQIELWTKGAEYQPGVYILPKSLDEKVARLHLKKIGVKLTTLRPDQAEYIGVTVEGPFKSDHYRY.

Positions 54, 128, and 189 each coordinate substrate. 190-192 (TTT) is an NAD(+) binding site. The substrate site is built by Lys-219 and Asp-223. NAD(+) is bound by residues Asn-224, 253 to 258 (GYGDVG), Glu-276, Asn-311, 332 to 334 (IGH), and Asn-377.

The protein belongs to the adenosylhomocysteinase family. In terms of assembly, homotetramer. It depends on NAD(+) as a cofactor.

Its subcellular location is the cytoplasm. It carries out the reaction S-adenosyl-L-homocysteine + H2O = L-homocysteine + adenosine. It functions in the pathway amino-acid biosynthesis; L-homocysteine biosynthesis; L-homocysteine from S-adenosyl-L-homocysteine: step 1/1. May play a key role in the regulation of the intracellular concentration of adenosylhomocysteine. The chain is Adenosylhomocysteinase from Rhodobacter capsulatus (strain ATCC BAA-309 / NBRC 16581 / SB1003).